Here is a 192-residue protein sequence, read N- to C-terminus: Imidazoleglycerol-phosphate dehydratase (192 aa).

The protein belongs to the imidazoleglycerol-phosphate dehydratase family.

The protein resides in the cytoplasm. The enzyme catalyses D-erythro-1-(imidazol-4-yl)glycerol 3-phosphate = 3-(imidazol-4-yl)-2-oxopropyl phosphate + H2O. It participates in amino-acid biosynthesis; L-histidine biosynthesis; L-histidine from 5-phospho-alpha-D-ribose 1-diphosphate: step 6/9. This chain is Imidazoleglycerol-phosphate dehydratase, found in Staphylococcus aureus (strain MRSA252).